The sequence spans 421 residues: MSLTSKLSITDVDLKDKRVLIRVDFNVPLDKNDNTTITNPQRIVGALPTIKYAIDNGAKAVILMSHLGRPDGKKNPKYSLKPVVPKLKELLGRDVIFTEDCVGPEVEETVNKASGGQVILLENLRFHAEEEGSSKDADGNKVKADKDAVAQFRKGLTALGDIYINDAFGTAHRAHSSMVGVDLPQKASGFLVKKELEYFAKALEEPQRPFLAILGGSKVSDKIQLIDNLLPKVNSLIITGGMAFTFKKTLENVKIGSSLFDEAGSKIVGNIIEKAKKHNVKVVLPVDYVTADKFAADAKTGYATDEQGIPDGYMGLDVGEKSVESYKQTIAESKTILWNGPPGVFEMEPFAKATKATLDAAVAAVQNGATVIIGGGDTATVAAKYGAEDKISHVSTGGGASLELLEGKELPGVAALSEKSK.

(2R)-3-phosphoglycerate contacts are provided by V23, D24, F25, N26, Q41, R42, S65, H66, G68, R69, L124, R125, H172, and R173. Residue G216 coordinates ADP. A CDP-binding site is contributed by G216. Residue K218 coordinates AMP. D221 contacts CDP. Mg(2+) is bound at residue D221. K222 provides a ligand contact to AMP. K222 contributes to the ATP binding site. ADP is bound at residue G240. G240 is a CDP binding site. AMP contacts are provided by G241 and G315. Positions 241 and 315 each coordinate ATP. CDP-binding residues include G340 and F345. ADP is bound at residue F345. Residue E346 coordinates AMP. Residues E346, D377, and T378 each contribute to the ATP site. Residue D377 participates in Mg(2+) binding.

It belongs to the phosphoglycerate kinase family. Monomer. Mg(2+) is required as a cofactor.

The protein resides in the cytoplasm. The protein localises to the mitochondrion. The catalysed reaction is (2R)-3-phosphoglycerate + ATP = (2R)-3-phospho-glyceroyl phosphate + ADP. It functions in the pathway carbohydrate degradation; glycolysis; pyruvate from D-glyceraldehyde 3-phosphate: step 2/5. Catalyzes one of the two ATP producing reactions in the glycolytic pathway via the reversible conversion of 1,3-diphosphoglycerate to 3-phosphoglycerate. Both L- and D- forms of purine and pyrimidine nucleotides can be used as substrates, but the activity is much lower on pyrimidines. Negatively regulates the biosynthesis of acetyl-CoA from pyruvate in the mitochondrion. The chain is Phosphoglycerate kinase (pgkA) from Emericella nidulans (strain FGSC A4 / ATCC 38163 / CBS 112.46 / NRRL 194 / M139) (Aspergillus nidulans).